The chain runs to 201 residues: Holliday junction branch migration complex subunit RuvA (201 aa).

The segment at 1–64 (MYAYIRGKLT…EDAQLLYGFI (64 aa)) is domain I. The tract at residues 65 to 143 (NEEEKDMFLS…ITRETTETLL (79 aa)) is domain II. A flexible linker region spans residues 144-150 (SMNEENS). Residues 151–201 (NSENLVKEALLALEALGYSKREISKVEKVLNKSTFDSVDEAVKLGLKTLVS) form a domain III region.

This sequence belongs to the RuvA family. As to quaternary structure, homotetramer. Forms an RuvA(8)-RuvB(12)-Holliday junction (HJ) complex. HJ DNA is sandwiched between 2 RuvA tetramers; dsDNA enters through RuvA and exits via RuvB. An RuvB hexamer assembles on each DNA strand where it exits the tetramer. Each RuvB hexamer is contacted by two RuvA subunits (via domain III) on 2 adjacent RuvB subunits; this complex drives branch migration. In the full resolvosome a probable DNA-RuvA(4)-RuvB(12)-RuvC(2) complex forms which resolves the HJ.

Its subcellular location is the cytoplasm. The RuvA-RuvB-RuvC complex processes Holliday junction (HJ) DNA during genetic recombination and DNA repair, while the RuvA-RuvB complex plays an important role in the rescue of blocked DNA replication forks via replication fork reversal (RFR). RuvA specifically binds to HJ cruciform DNA, conferring on it an open structure. The RuvB hexamer acts as an ATP-dependent pump, pulling dsDNA into and through the RuvAB complex. HJ branch migration allows RuvC to scan DNA until it finds its consensus sequence, where it cleaves and resolves the cruciform DNA. In Staphylococcus haemolyticus (strain JCSC1435), this protein is Holliday junction branch migration complex subunit RuvA.